A 360-amino-acid chain; its full sequence is Methylthioribose-1-phosphate isomerase (360 aa).

Catalysis depends on D252, which acts as the Proton donor.

The protein belongs to the eIF-2B alpha/beta/delta subunits family. MtnA subfamily.

The protein resides in the cytoplasm. Its subcellular location is the nucleus. The enzyme catalyses 5-(methylsulfanyl)-alpha-D-ribose 1-phosphate = 5-(methylsulfanyl)-D-ribulose 1-phosphate. It functions in the pathway amino-acid biosynthesis; L-methionine biosynthesis via salvage pathway; L-methionine from S-methyl-5-thio-alpha-D-ribose 1-phosphate: step 1/6. Catalyzes the interconversion of methylthioribose-1-phosphate (MTR-1-P) into methylthioribulose-1-phosphate (MTRu-1-P). The polypeptide is Methylthioribose-1-phosphate isomerase (Trichoplax adhaerens (Trichoplax reptans)).